The sequence spans 229 residues: GTP cyclohydrolase 1 (229 aa).

Residues 1 to 26 form a disordered region; that stretch reads MDAKIKPLRGGKPADARPEFQPAELD. The Zn(2+) site is built by C118, H121, and C189.

This sequence belongs to the GTP cyclohydrolase I family. As to quaternary structure, toroid-shaped homodecamer, composed of two pentamers of five dimers.

It catalyses the reaction GTP + H2O = 7,8-dihydroneopterin 3'-triphosphate + formate + H(+). The protein operates within cofactor biosynthesis; 7,8-dihydroneopterin triphosphate biosynthesis; 7,8-dihydroneopterin triphosphate from GTP: step 1/1. In Rhodopseudomonas palustris (strain BisB5), this protein is GTP cyclohydrolase 1.